Here is a 149-residue protein sequence, read N- to C-terminus: Snake venom vascular endothelial growth factor toxin 2 (149 aa).

A signal peptide spans 1–24; the sequence is MAAYLLAVAILFCIQGWPSGTVQG. A Pyrrolidone carboxylic acid modification is found at Gln-25. 3 disulfide bridges follow: Cys-38–Cys-80, Cys-69–Cys-115, and Cys-73–Cys-117. The segment at 118 to 149 is disordered; it reads RPRSGRVNSGKRKRNPEEGGAESQVPLGLTSF.

It belongs to the PDGF/VEGF growth factor family. Snake venom VEGF subfamily. As to quaternary structure, homodimer; disulfide-linked. Interacts with VEGF receptor-1 (FLT1) with a high affinity, whereas it binds to VEGF receptor-2 (KDR) with a low affinity. Does not bind VEGF receptor-3 (FLT4). In terms of tissue distribution, expressed by the venom gland.

Its subcellular location is the secreted. In terms of biological role, snake venom VEGFs that may contribute to venom dispersion and prey subjugation by inducing vascular permeability and hypotension. This protein induces an increase in capillary permeability after intradermal injection, as well as a drastic hypotensive effect after intravenous injection. The hypotension is mediated by nitric oxide (NO), which is produced by VEGF-activated endothelium NO synthase. Also induces angiogenesis in vitro. Like other crotalid VEGFs, this protein interacts with VEGF receptor-1 (FLT1) with a high affinity, whereas it binds to VEGF receptor-2 (KDR) with a low affinity. This Sistrurus catenatus edwardsii (Desert massasauga) protein is Snake venom vascular endothelial growth factor toxin 2.